We begin with the raw amino-acid sequence, 74 residues long: Apolipoprotein C-I, acidic form (74 aa).

The first 26 residues, 1-26 (MRLFLSLPVLVVVLSMVLEGPTPAQG), serve as a signal peptide directing secretion.

Belongs to the apolipoprotein C1 family.

It localises to the secreted. The chain is Apolipoprotein C-I, acidic form (APOC1A) from Colobus guereza (Mantled guereza).